The following is a 395-amino-acid chain: Imidazolonepropionase (395 aa).

Residues histidine 63 and histidine 65 each coordinate Fe(3+). Residues histidine 63 and histidine 65 each contribute to the Zn(2+) site. Arginine 72, tyrosine 135, and histidine 168 together coordinate 4-imidazolone-5-propanoate. Tyrosine 135 contributes to the N-formimidoyl-L-glutamate binding site. Residue histidine 233 coordinates Fe(3+). Histidine 233 serves as a coordination point for Zn(2+). Position 236 (glutamine 236) interacts with 4-imidazolone-5-propanoate. Aspartate 308 serves as a coordination point for Fe(3+). Aspartate 308 provides a ligand contact to Zn(2+). N-formimidoyl-L-glutamate contacts are provided by asparagine 310 and glycine 312. Threonine 313 serves as a coordination point for 4-imidazolone-5-propanoate.

Belongs to the metallo-dependent hydrolases superfamily. HutI family. It depends on Zn(2+) as a cofactor. Fe(3+) is required as a cofactor.

Its subcellular location is the cytoplasm. It catalyses the reaction 4-imidazolone-5-propanoate + H2O = N-formimidoyl-L-glutamate. It functions in the pathway amino-acid degradation; L-histidine degradation into L-glutamate; N-formimidoyl-L-glutamate from L-histidine: step 3/3. In terms of biological role, catalyzes the hydrolytic cleavage of the carbon-nitrogen bond in imidazolone-5-propanoate to yield N-formimidoyl-L-glutamate. It is the third step in the universal histidine degradation pathway. This Cereibacter sphaeroides (strain ATCC 17023 / DSM 158 / JCM 6121 / CCUG 31486 / LMG 2827 / NBRC 12203 / NCIMB 8253 / ATH 2.4.1.) (Rhodobacter sphaeroides) protein is Imidazolonepropionase.